The chain runs to 62 residues: UPF0434 protein NGR_c31900 (62 aa).

The protein belongs to the UPF0434 family.

The protein is UPF0434 protein NGR_c31900 of Sinorhizobium fredii (strain NBRC 101917 / NGR234).